The sequence spans 631 residues: Probable protein phosphatase 2C 31 (631 aa).

Disordered regions lie at residues 119–142 (GPLH…SDRF) and 205–231 (LSGR…PKGN). The segment covering 131–140 (ASGSASTASD) has biased composition (polar residues). In terms of domain architecture, PPM-type phosphatase spans 221–622 (DGDYRSTPKG…DDVSIIVMSF (402 aa)). The Mn(2+) site is built by Asp261 and Gly262. The tract at residues 324–347 (GGDDDPDAERKAKRGRIERNADDD) is disordered. Residues Asp550 and Asp613 each coordinate Mn(2+).

It belongs to the PP2C family. Requires Mg(2+) as cofactor. Mn(2+) serves as cofactor.

The catalysed reaction is O-phospho-L-seryl-[protein] + H2O = L-seryl-[protein] + phosphate. It carries out the reaction O-phospho-L-threonyl-[protein] + H2O = L-threonyl-[protein] + phosphate. This Oryza sativa subsp. japonica (Rice) protein is Probable protein phosphatase 2C 31.